A 97-amino-acid chain; its full sequence is Type 1 phosphatases regulator YPI2 (97 aa).

The tract at residues Met1–Thr97 is disordered. The segment covering Glu43–Arg53 has biased composition (basic and acidic residues). Residues Arg54–Leu65 show a composition bias toward basic residues.

It belongs to the YPI1 family.

The protein localises to the nucleus. Functionally, regulator of type 1 phosphatases which maintains protein phosphatase activity under strict control. This is Type 1 phosphatases regulator YPI2 (YPI2) from Vanderwaltozyma polyspora (strain ATCC 22028 / DSM 70294 / BCRC 21397 / CBS 2163 / NBRC 10782 / NRRL Y-8283 / UCD 57-17) (Kluyveromyces polysporus).